We begin with the raw amino-acid sequence, 347 residues long: Holliday junction branch migration complex subunit RuvB (347 aa).

The segment at 1–181 is large ATPase domain (RuvB-L); the sequence is MTRNSLLNPE…FGIPVRLQFY (181 aa). Residues Leu-20, Arg-21, Gly-62, Lys-65, Thr-66, Thr-67, Arg-171, Tyr-181, and Arg-218 each contribute to the ATP site. Thr-66 contributes to the Mg(2+) binding site. Residues 182-252 are small ATPAse domain (RuvB-S); it reads SIEELRQVIT…IADEALNRLE (71 aa). A head domain (RuvB-H) region spans residues 255–347; that stretch reads KLGLDLMDRR…SEIKNQPGLL (93 aa). Residues Arg-291, Arg-310, and Arg-315 each contribute to the DNA site.

Belongs to the RuvB family. In terms of assembly, homohexamer. Forms an RuvA(8)-RuvB(12)-Holliday junction (HJ) complex. HJ DNA is sandwiched between 2 RuvA tetramers; dsDNA enters through RuvA and exits via RuvB. An RuvB hexamer assembles on each DNA strand where it exits the tetramer. Each RuvB hexamer is contacted by two RuvA subunits (via domain III) on 2 adjacent RuvB subunits; this complex drives branch migration. In the full resolvosome a probable DNA-RuvA(4)-RuvB(12)-RuvC(2) complex forms which resolves the HJ.

The protein localises to the cytoplasm. It catalyses the reaction ATP + H2O = ADP + phosphate + H(+). In terms of biological role, the RuvA-RuvB-RuvC complex processes Holliday junction (HJ) DNA during genetic recombination and DNA repair, while the RuvA-RuvB complex plays an important role in the rescue of blocked DNA replication forks via replication fork reversal (RFR). RuvA specifically binds to HJ cruciform DNA, conferring on it an open structure. The RuvB hexamer acts as an ATP-dependent pump, pulling dsDNA into and through the RuvAB complex. RuvB forms 2 homohexamers on either side of HJ DNA bound by 1 or 2 RuvA tetramers; 4 subunits per hexamer contact DNA at a time. Coordinated motions by a converter formed by DNA-disengaged RuvB subunits stimulates ATP hydrolysis and nucleotide exchange. Immobilization of the converter enables RuvB to convert the ATP-contained energy into a lever motion, pulling 2 nucleotides of DNA out of the RuvA tetramer per ATP hydrolyzed, thus driving DNA branch migration. The RuvB motors rotate together with the DNA substrate, which together with the progressing nucleotide cycle form the mechanistic basis for DNA recombination by continuous HJ branch migration. Branch migration allows RuvC to scan DNA until it finds its consensus sequence, where it cleaves and resolves cruciform DNA. The sequence is that of Holliday junction branch migration complex subunit RuvB from Zymomonas mobilis subsp. mobilis (strain ATCC 31821 / ZM4 / CP4).